Reading from the N-terminus, the 312-residue chain is Tumor necrosis factor receptor type 1-associated DEATH domain protein (312 aa).

Residues 147–163 (LRDEELAELEDALRNLK) carry the Nuclear export signal motif. The tract at residues 170 to 195 (GGDGEVASAPLQPPVPSLSEVKPPPP) is disordered. The 111-residue stretch at 179–289 (PLQPPVPSLS…ATLQRLVEAL (111 aa)) folds into the Death domain. A compositionally biased stretch (pro residues) spans 180–195 (LQPPVPSLSEVKPPPP). The segment at 222–289 (FARSVGLKWR…ATLQRLVEAL (68 aa)) is interaction with KRT14 and KRT18. The Nuclear localization signal signature appears at 231–244 (RKVGRSLQRGCRAL). (Microbial infection) N-beta-linked (GlcNAc) arginine glycans are attached at residues R235 and R245.

In terms of assembly, stimulation of TNF-alpha receptor TNFRSF1A leads to the formation of two distinct signaling complexes. Plasma membrane-bound complex I is composed of TNFRSF1A, TRADD, RIPK1, TRAF2 and BIRC2/c-IAP1 or BIRC3 which interacts with CHUCK/IKK-alpha, IKBKB/IKK-beta and IKBKG/IKK-gamma promoting cell survival. Subsequently, TRADD, RIPK1 and TRAF2 dissociate from TNFRSF1A and form cytoplasmic complex II with FADD and caspase CASP8 promoting cell apoptosis. Within complex I, interacts with TNFRSF1A/TNFR1, TRAF2 and kinase RIPK1. Within complex I, interacts with TRPC4AP; the interaction promotes NF-kappa B activation. UXT1 associates with complex I; the interaction prevents the formation of complex II. Within complex I Interacts with scaffold protein DAB2IP. Interacts with autophagy receptor SQSTM1. Interacts with E3 ligase TRIP12. Interacts with kinase HIPK2. Interacts with keratin KRT14. Interacts with keratin KRT18. Interacts with keratins KRT16 and KRT17. Interacts with FADD. Interacts with TOMM70. Interacts with TMC8; the interaction impairs the formation of complex I and facilites complex II formation. (Microbial infection) Glycosylated at Arg-235 by enteropathogenic E.coli protein NleB1, C.rodentium protein NleB and S.typhimurium proteins Ssek1 and Ssek3: arginine GlcNAcylation prevents homotypic/heterotypic death domain interactions and assembly of the oligomeric TNFRSF1A/TNFR1 complex, thereby disrupting TNF signaling. In terms of tissue distribution, found in all examined tissues.

The protein localises to the nucleus. The protein resides in the cytoplasm. It is found in the cytoskeleton. Functionally, adapter molecule for TNFRSF1A/TNFR1 that specifically associates with the cytoplasmic domain of activated TNFRSF1A/TNFR1 mediating its interaction with FADD. Overexpression of TRADD leads to two major TNF-induced responses, apoptosis and activation of NF-kappa-B. The nuclear form acts as a tumor suppressor by preventing ubiquitination and degradation of isoform p19ARF/ARF of CDKN2A by TRIP12: acts by interacting with TRIP12, leading to disrupt interaction between TRIP12 and isoform p19ARF/ARF of CDKN2A. In Homo sapiens (Human), this protein is Tumor necrosis factor receptor type 1-associated DEATH domain protein.